A 229-amino-acid polypeptide reads, in one-letter code: Ribonuclease T (229 aa).

The region spanning 23 to 197 is the Exonuclease domain; the sequence is VIIDVETAGF…YDTERTAELF (175 aa). Positions 26, 28, 184, and 189 each coordinate Mg(2+). Histidine 184 functions as the Proton donor/acceptor in the catalytic mechanism.

This sequence belongs to the RNase T family. Homodimer. Requires Mg(2+) as cofactor.

In terms of biological role, trims short 3' overhangs of a variety of RNA species, leaving a one or two nucleotide 3' overhang. Responsible for the end-turnover of tRNA: specifically removes the terminal AMP residue from uncharged tRNA (tRNA-C-C-A). Also appears to be involved in tRNA biosynthesis. The polypeptide is Ribonuclease T (Haemophilus influenzae (strain PittEE)).